The primary structure comprises 235 residues: Uridylate kinase (235 aa).

Residue 9–12 coordinates ATP; that stretch reads KLSG. An involved in allosteric activation by GTP region spans residues 17 to 22; it reads GNQGYG. Glycine 51 contacts UMP. Glycine 52 and arginine 56 together coordinate ATP. Residues aspartate 71 and 132 to 139 each bind UMP; that span reads CGNPFFTT. The ATP site is built by threonine 159, tyrosine 165, and aspartate 168.

The protein belongs to the UMP kinase family. In terms of assembly, homohexamer.

Its subcellular location is the cytoplasm. It catalyses the reaction UMP + ATP = UDP + ADP. It functions in the pathway pyrimidine metabolism; CTP biosynthesis via de novo pathway; UDP from UMP (UMPK route): step 1/1. With respect to regulation, allosterically activated by GTP. Inhibited by UTP. Functionally, catalyzes the reversible phosphorylation of UMP to UDP. In Synechococcus sp. (strain CC9311), this protein is Uridylate kinase.